Reading from the N-terminus, the 151-residue chain is Natriuretic peptides A (151 aa).

An N-terminal signal peptide occupies residues 1 to 25 (MSSFSTTTVSFLLLLAFQLLGQTRA). Residues 62–105 (VLSEPNEEAGAALSPLPEVPPWTGEVSPAQRDGGALGRGPWDSS) are disordered. Residues 93–103 (DGGALGRGPWD) constitute a propeptide that is removed on maturation. Ser129 is modified (phosphoserine). A disulfide bridge links Cys130 with Cys146. The important for degradation of atrial natriuretic peptide by IDE stretch occupies residues 147-151 (NSFRY).

Belongs to the natriuretic peptide family. Homodimer; disulfide-linked antiparallel dimer. In terms of processing, the precursor molecule is proteolytically cleaved by CORIN at Arg-123 to produce atrial natriuretic peptide. Undergoes further proteolytic cleavage by unknown proteases to give rise to long-acting natriuretic peptide, vessel dilator and kaliuretic peptide. Additional processing gives rise to the auriculin and atriopeptin peptides. In the kidneys, alternative processing by an unknown protease results in the peptide urodilatin. Cleavage by MME initiates degradation of the factor and thereby regulates its activity. Degraded by IDE (in vitro). During IDE degradation, the resulting products can temporarily stimulate NPR2 to produce cGMP, before the fragments are completely degraded and inactivated by IDE (in vitro). Post-translationally, degraded by IDE. In terms of processing, phosphorylation on Ser-129 decreases vasorelaxant activity. Detected in the kidney distal tubular cells (at protein level). Present in urine (at protein level). In terms of tissue distribution, detected in atrial and ventricular plasma samples, and in adipocytes (at protein level). Detected in urine in one study. However, was not detected in urine in another study. In the brain, predominantly expressed in the gray matter with very weak expression in the white matter (at protein level). Localizes to astrocyte-like structures throughout the white matter, and in the cerebral vessels detected in the leptomeningeal and parenchymal vessels, and endothelium and smooth muscle layers (at protein level). Relatively low levels of expression in the kidneys compared to urodilatin (at protein level).

The protein resides in the secreted. Its subcellular location is the perikaryon. It localises to the cell projection. Its function is as follows. Hormone that plays a key role in mediating cardio-renal homeostasis, and is involved in vascular remodeling and regulating energy metabolism. Acts by specifically binding and stimulating NPR1 to produce cGMP, which in turn activates effector proteins, such as PRKG1, that drive various biological responses. Regulates vasodilation, natriuresis, diuresis and aldosterone synthesis and is therefore essential for regulating blood pressure, controlling the extracellular fluid volume and maintaining the fluid-electrolyte balance. Also involved in inhibiting cardiac remodeling and cardiac hypertrophy by inducing cardiomyocyte apoptosis and attenuating the growth of cardiomyocytes and fibroblasts. Plays a role in female pregnancy by promoting trophoblast invasion and spiral artery remodeling in uterus, and thus prevents pregnancy-induced hypertension. In adipose tissue, acts in various cGMP- and PKG-dependent pathways to regulate lipid metabolism and energy homeostasis. This includes up-regulating lipid metabolism and mitochondrial oxygen utilization by activating the AMP-activated protein kinase (AMPK), and increasing energy expenditure by acting via MAPK11 to promote the UCP1-dependent thermogenesis of brown adipose tissue. Binds the clearance receptor NPR3 which removes the hormone from circulation. Functionally, may have a role in cardio-renal homeostasis through regulation of natriuresis, diuresis, vasodilation, and inhibiting aldosterone synthesis. In vitro, promotes the production of cGMP and induces vasodilation. May promote natriuresis, at least in part, by enhancing prostaglandin E2 synthesis resulting in the inhibition of renal Na+-K+-ATPase. However reports on the involvement of this peptide in mammal blood volume and blood pressure homeostasis are conflicting; according to a report, in vivo it is not sufficient to activate cGMP and does not inhibit collecting duct transport nor effect diuresis and natriuresis. Appears to bind to specific receptors that are distinct from the receptors bound by atrial natriuretic peptide and vessel dilator. Possibly enhances protein excretion in urine by decreasing proximal tubular protein reabsorption. May have a role in cardio-renal homeostasis through regulation of natriuresis, diuresis, and vasodilation. In vitro, promotes the production of cGMP and induces vasodilation. May promote natriuresis, at least in part, by enhancing prostaglandin E2 synthesis resulting in the inhibition of renal Na+-K+-ATPase. However reports on the involvement of this peptide in mammal blood volume and blood pressure homeostasis are conflicting; according to a report it is not sufficient to activate cGMP and does not inhibit collecting duct transport nor effect diuresis and natriuresis. Appears to bind to specific receptors that are distinct from the receptors bound by the atrial natriuretic and long-acting natriuretic peptides. Possibly functions in protein excretion in urine by maintaining the integrity of the proximal tubules and enhancing protein excretion by decreasing proximal tubular protein reabsorption. In terms of biological role, may have a role in cardio-renal homeostasis through regulation of diuresis and inhibiting aldosterone synthesis. In vitro, promotes the production of cGMP and induces vasodilation. May promote natriuresis, at least in part, by enhancing prostaglandin E2 synthesis resulting in the inhibition of renal Na+-K+-ATPase. May have a role in potassium excretion but not sodium excretion (natriuresis). Possibly enhances protein excretion in urine by decreasing proximal tubular protein reabsorption. Its function is as follows. Hormone produced in the kidneys that appears to be important for maintaining cardio-renal homeostasis. Mediates vasodilation, natriuresis and diuresis primarily in the renal system, in order to maintain the extracellular fluid volume and control the fluid-electrolyte balance. Specifically binds and stimulates cGMP production by renal transmembrane receptors, likely NPR1. Urodilatin not ANP, may be the natriuretic peptide responsible for the regulation of sodium and water homeostasis in the kidney. Functionally, may have a role in cardio-renal homeostasis through regulation of natriuresis and vasodilation. In vivo promotes natriuresis and in vitro, vasodilates renal artery strips. May have a role in cardio-renal homeostasis through regulation of regulation of natriuresis and vasodilation. In vivo promotes natriuresis. In vitro, vasodilates intestinal smooth muscle but not smooth muscle strips. In terms of biological role, may have a role in cardio-renal homeostasis through regulation of natriuresis and vasodilation. In vivo promotes natriuresis. In vitro, selectively vasodilates intestinal and vascular smooth muscle strips. Its function is as follows. May have a role in cardio-renal homeostasis through regulation of natriuresis and vasodilation. In vivo promotes natriuresis. In vitro, selectively vasodilates intestinal smooth muscle but not vascular smooth muscle strips. This Homo sapiens (Human) protein is Natriuretic peptides A (NPPA).